A 410-amino-acid chain; its full sequence is 3-phosphoshikimate 1-carboxyvinyltransferase (410 aa).

Residues lysine 20, serine 21, and arginine 25 each contribute to the 3-phosphoshikimate site. A phosphoenolpyruvate-binding site is contributed by lysine 20. The phosphoenolpyruvate site is built by glycine 87 and arginine 115. Residues serine 157, serine 158, glutamine 159, serine 183, aspartate 293, and lysine 320 each coordinate 3-phosphoshikimate. Glutamine 159 is a phosphoenolpyruvate binding site. Residue aspartate 293 is the Proton acceptor of the active site. Positions 324, 365, and 391 each coordinate phosphoenolpyruvate.

It belongs to the EPSP synthase family. Monomer.

The protein localises to the cytoplasm. It carries out the reaction 3-phosphoshikimate + phosphoenolpyruvate = 5-O-(1-carboxyvinyl)-3-phosphoshikimate + phosphate. The protein operates within metabolic intermediate biosynthesis; chorismate biosynthesis. Its function is as follows. Catalyzes the transfer of the enolpyruvyl moiety of phosphoenolpyruvate (PEP) to the 5-hydroxyl of shikimate-3-phosphate (S3P) to produce enolpyruvyl shikimate-3-phosphate and inorganic phosphate. The sequence is that of 3-phosphoshikimate 1-carboxyvinyltransferase from Thermoplasma volcanium (strain ATCC 51530 / DSM 4299 / JCM 9571 / NBRC 15438 / GSS1).